We begin with the raw amino-acid sequence, 1675 residues long: Coadhesin (1675 aa).

Topologically, residues 1–1356 are extracellular; it reads QGNYYSYGGT…TIADQADAAK (1356 aa). The F5/8 type C 1 domain occupies 11–160; the sequence is TPGTPIGCTN…ICMRVGVESC (150 aa). TSP type-1 domains are found at residues 168–220, 224–279, 281–336, 338–393, 403–458, 460–515, and 517–572; these read NGAW…NDCV, NGGW…QFCP, DGGW…QCCP, HGGW…QTCP, NGNY…IPCP, NGNW…TACP, and DGGW…GPCP. Disulfide bonds link Cys180-Cys216, Cys184-Cys219, Cys194-Cys206, Cys236-Cys273, Cys240-Cys278, Cys251-Cys263, Cys293-Cys330, Cys297-Cys335, Cys308-Cys320, Cys350-Cys387, Cys354-Cys392, Cys365-Cys377, Cys415-Cys452, Cys419-Cys457, Cys430-Cys442, Cys472-Cys509, Cys476-Cys514, Cys487-Cys499, Cys528-Cys566, Cys532-Cys571, and Cys543-Cys555. A disordered region spans residues 567-588; that stretch reads NKGPCPTSPPTISPPTTGSPAD. VWFA domains follow at residues 595–769, 778–958, and 966–1141; these read DLVF…MDRI, DIGF…FKAL, and DLTF…ISII. The 55-residue stretch at 1144–1198 folds into the TSP type-1 8 domain; that stretch reads PSGLSKWSSWSACSKTCRYLGKAGTQIRTRDCKIPELGCDGMRIDTVECNKMDCE. 3 disulfides stabilise this stretch: Cys1156–Cys1192, Cys1160–Cys1197, and Cys1175–Cys1182. The 145-residue stretch at 1192–1336 folds into the F5/8 type C 2 domain; that stretch reads CNKMDCEGCG…PCMQAAVFGC (145 aa). Residues 1357–1377 form a helical membrane-spanning segment; that stretch reads GILIVLWILAGILTFLLLMAC. Topologically, residues 1378-1675 are cytoplasmic; that stretch reads CYYCCWHVCC…RGEEWYSRWG (298 aa). The span at 1463-1480 shows a compositional bias: basic and acidic residues; that stretch reads EKHVTAEDVKSEKPKYSE. The disordered stretch occupies residues 1463–1491; sequence EKHVTAEDVKSEKPKYSEEASSGTIKSGS. Residues 1481 to 1491 are compositionally biased toward polar residues; sequence EASSGTIKSGS.

In terms of tissue distribution, component of the acid-insoluble and acid-soluble organic matrix of the aragonitic skeleton (at protein level).

Its subcellular location is the membrane. This Acropora millepora (Staghorn coral) protein is Coadhesin.